Here is a 289-residue protein sequence, read N- to C-terminus: MTLTLNHCPAPAKLNLFLHVTGRRADGYHLLQSVFQLIDRGDVLHFATRDDNLIQRTTDLPGVPAESDLVVRAAKLLQTVATEKNPAKNFGADIAVEKKLPMGGGLGGGSSDAATTLLALNHLWQTGLSRAELMALGLQLGADVPFFIFGQNAFAEGIGEALVEVETPDRWFVVIEPGVSVPTPQIFSSTELTRDTKPVKISDFSGAQESFGKNDLQVVAEKLFPPIAEAIQWLGQYGDARMTGSGACVFCPFEQEQQADAVLTTVPPHWKAWKAKAIKHHPLAYLQQS.

The active site involves K13. 101 to 111 (PMGGGLGGGSS) contacts ATP. The active site involves D143.

This sequence belongs to the GHMP kinase family. IspE subfamily.

It catalyses the reaction 4-CDP-2-C-methyl-D-erythritol + ATP = 4-CDP-2-C-methyl-D-erythritol 2-phosphate + ADP + H(+). It participates in isoprenoid biosynthesis; isopentenyl diphosphate biosynthesis via DXP pathway; isopentenyl diphosphate from 1-deoxy-D-xylulose 5-phosphate: step 3/6. Its function is as follows. Catalyzes the phosphorylation of the position 2 hydroxy group of 4-diphosphocytidyl-2C-methyl-D-erythritol. This Janthinobacterium sp. (strain Marseille) (Minibacterium massiliensis) protein is 4-diphosphocytidyl-2-C-methyl-D-erythritol kinase.